The chain runs to 360 residues: MKKIFALALIAPLLISCSSKKNAENAYNEAWIKDTNGFDILMGQFAHNIENIWGFNEVLIAGPKDYVKYTDQYQTRSHINFDEGTITVETIAGTEPAARLRRAIITTLLMGDDPGSIDLYSDVNDIQISREPFLYGQVVDNTGQPIRWEGRASKFADYLLQTHLKSRSNGLRIIYSVTINLVPNHLDKRAHKYIGMVRQASRKYGVDESLILAIMQTESSFNPYAVSHADALGLMQVVQHSAGKDVFRSQGKWGTPSRSYLFDPQSNIDTGTAYLAMLNNVYLGGITNPTSRRYAVITAYNGGAGSVLRVFSSDKDQAVNIINQLSPGDVYETLTNRHPSAESRRYLYKVNTAQKMYRRK.

The signal sequence occupies residues 1 to 16 (MKKIFALALIAPLLIS). The N-palmitoyl cysteine moiety is linked to residue Cys17. Cys17 carries S-diacylglycerol cysteine lipidation.

It belongs to the transglycosylase Slt family.

It is found in the cell outer membrane. The catalysed reaction is Exolytic cleavage of the (1-&gt;4)-beta-glycosidic linkage between N-acetylmuramic acid (MurNAc) and N-acetylglucosamine (GlcNAc) residues in peptidoglycan, from either the reducing or the non-reducing ends of the peptidoglycan chains, with concomitant formation of a 1,6-anhydrobond in the MurNAc residue.. Murein-degrading enzyme. May play a role in recycling of muropeptides during cell elongation and/or cell division. This is Membrane-bound lytic murein transglycosylase C from Cronobacter sakazakii (strain ATCC BAA-894) (Enterobacter sakazakii).